A 638-amino-acid chain; its full sequence is Sodium- and chloride-dependent neutral and basic amino acid transporter B(0+) (638 aa).

The Cytoplasmic segment spans residues 1 to 44; sequence MDRLKCPNFFKCRQKEKVTASSENFHVGENDENQERGNWSKKSD. 3 helical membrane-spanning segments follow: residues 45–65, 72–92, and 110–130; these read YLLSMVGYAVGLGNVWRFPYL, GAFLIPYAIMLALAGLPLFFL, and ILPLFQGVGITMVLISVFVAI. At 131–230 the chain is on the extracellular side; that stretch reads YYNVIIAYSL…RSSGMDETGV (100 aa). N-linked (GlcNAc...) asparagine glycans are attached at residues N155, N163, N174, N185, N193, and N198. Helical transmembrane passes span 231–251 and 257–277; these read VVWYLALCLLLAWLIVGAALF and SGKVVYFTALFPYVVLLILLI. N298 is a glycosylation site (N-linked (GlcNAc...) asparagine). The next 7 membrane-spanning stretches (helical) occupy residues 311–331, 344–364, 395–415, 453–473, 476–496, 524–544, and 559–579; these read AATQIFYSLSVAWGGLVALSS, IIVCLTNCLTSVFAGFAIFSI, LAQLPAGPFWSILFFFMLLTL, ILFLLGLLCVTQAGIYWVHLI, FCAGWGILIAAILEIAGIIWI, CWFVITPILLSAILVWSLVKF, and VALGWCMIIFCIIWIPIMAII. Topologically, residues 580–638 are cytoplasmic; the sequence is KIVQAEGNILQRIISCCRPASNWGPYLEKHRGERYRDMAEPAKETDHEIPTISGSTKPE. Residues 618–628 show a composition bias toward basic and acidic residues; the sequence is AEPAKETDHEI. The tract at residues 618–638 is disordered; it reads AEPAKETDHEIPTISGSTKPE.

It belongs to the sodium:neurotransmitter symporter (SNF) (TC 2.A.22) family. SLC6A14 subfamily. In terms of tissue distribution, expressed in the distal region of the intestinal tract: cecum and colon.

It localises to the membrane. Its subcellular location is the apical cell membrane. It carries out the reaction glycine(out) + chloride(out) + 2 Na(+)(out) = glycine(in) + chloride(in) + 2 Na(+)(in). It catalyses the reaction L-leucine(out) + chloride(out) + 2 Na(+)(out) = L-leucine(in) + chloride(in) + 2 Na(+)(in). The enzyme catalyses L-glutamine(out) + chloride(out) + 2 Na(+)(out) = L-glutamine(in) + chloride(in) + 2 Na(+)(in). The catalysed reaction is L-arginine(out) + chloride(out) + 2 Na(+)(out) = L-arginine(in) + chloride(in) + 2 Na(+)(in). It carries out the reaction (R)-carnitine(out) + chloride(out) + 2 Na(+)(out) = (R)-carnitine(in) + chloride(in) + 2 Na(+)(in). It catalyses the reaction O-propanoyl-(R)-carnitine(out) + chloride(out) + 2 Na(+)(out) = O-propanoyl-(R)-carnitine(in) + chloride(in) + 2 Na(+)(in). The enzyme catalyses L-isoleucine(out) + chloride(out) + 2 Na(+)(out) = L-isoleucine(in) + chloride(in) + 2 Na(+)(in). The catalysed reaction is L-methionine(out) + chloride(out) + 2 Na(+)(out) = L-methionine(in) + chloride(in) + 2 Na(+)(in). It carries out the reaction L-valine(out) + chloride(out) + 2 Na(+)(out) = L-valine(in) + chloride(in) + 2 Na(+)(in). It catalyses the reaction L-alanine(out) + chloride(out) + 2 Na(+)(out) = L-alanine(in) + chloride(in) + 2 Na(+)(in). The enzyme catalyses L-serine(out) + chloride(out) + 2 Na(+)(out) = L-serine(in) + chloride(in) + 2 Na(+)(in). The catalysed reaction is L-cysteine(out) + chloride(out) + 2 Na(+)(out) = L-cysteine(in) + chloride(in) + 2 Na(+)(in). It carries out the reaction L-asparagine(out) + chloride(out) + 2 Na(+)(out) = L-asparagine(in) + chloride(in) + 2 Na(+)(in). It catalyses the reaction L-threonine(out) + chloride(out) + 2 Na(+)(out) = L-threonine(in) + chloride(in) + 2 Na(+)(in). The enzyme catalyses L-phenylalanine(out) + chloride(out) + 2 Na(+)(out) = L-phenylalanine(in) + chloride(in) + 2 Na(+)(in). The catalysed reaction is L-tryptophan(out) + chloride(out) + 2 Na(+)(out) = L-tryptophan(in) + chloride(in) + 2 Na(+)(in). It carries out the reaction L-tyrosine(out) + chloride(out) + 2 Na(+)(out) = L-tyrosine(in) + chloride(in) + 2 Na(+)(in). It catalyses the reaction L-histidine(out) + chloride(out) + 2 Na(+)(out) = L-histidine(in) + chloride(in) + 2 Na(+)(in). The enzyme catalyses L-lysine(out) + chloride(out) + 2 Na(+)(out) = L-lysine(in) + chloride(in) + 2 Na(+)(in). The catalysed reaction is O-butanoyl-(R)-carnitine(out) + chloride(out) + 2 Na(+)(out) = O-butanoyl-(R)-carnitine(in) + chloride(in) + 2 Na(+)(in). In terms of biological role, amino acid transporter that plays an important role in the absorption of amino acids in the intestinal tract. Mediates the uptake of a broad range of neutral and cationic amino acids (with the exception of proline) in a Na(+)/Cl(-)-dependent manner. Transports non-alpha-amino acids such as beta-alanine with low affinity, and has a higher affinity for dipolar and cationic amino acids such as leucine and lysine. Can also transport carnitine, butyrylcarnitine and propionylcarnitine coupled to the transmembrane gradients of Na(+) and Cl(-). This Mus musculus (Mouse) protein is Sodium- and chloride-dependent neutral and basic amino acid transporter B(0+).